We begin with the raw amino-acid sequence, 105 residues long: MANWDGKYISPYVEHGKKSEQVKKITVSIPIKVLEILTNERTRRQIKNLRHATNSELLCEAFLHAFTGQPLPTDSDLLKERHDEIPEYAKQIMRESGVDPEEWEY.

It belongs to the MetJ family. In terms of assembly, homodimer.

The protein localises to the cytoplasm. This regulatory protein, when combined with SAM (S-adenosylmethionine) represses the expression of the methionine regulon and of enzymes involved in SAM synthesis. The polypeptide is Met repressor (Actinobacillus succinogenes (strain ATCC 55618 / DSM 22257 / CCUG 43843 / 130Z)).